Here is a 417-residue protein sequence, read N- to C-terminus: Paired box protein Pax-2 (417 aa).

The segment at residues 16-142 (GHGGVNQLGG…SSINRIIRTK (127 aa)) is a DNA-binding region (paired). Residues 19-75 (GVNQLGGVFVNGRPLPDVVRQRIVELAHQGVRPCDISRQLRVSHGCVSKILGRYYET) are PAI subdomain. The interval 94–142 (KVVDKIAEYKRQNPTMFAWEIRDRLLAEGICDNDTVPSVSSINRIIRTK) is RED subdomain. Phosphothreonine is present on Thr-226. Residues 304 to 325 (KSSLSASTNPELGSNVSGTQTY) form a disordered region. The segment covering 305 to 325 (SSLSASTNPELGSNVSGTQTY) has biased composition (polar residues).

Interacts with ELGN3; the interaction targets PAX2 for destruction. Interacts with TLE4. As to expression, expressed in primitive cells of the kidney, ureter, eye, ear and central nervous system.

The protein resides in the nucleus. Its function is as follows. Transcription factor that may have a role in kidney cell differentiation. Has a critical role in the development of the urogenital tract, the eyes, and the CNS. The chain is Paired box protein Pax-2 (PAX2) from Homo sapiens (Human).